Consider the following 105-residue polypeptide: Venom metalloprotease inhibitor (105 aa).

An N-terminal signal peptide occupies residues 1 to 21; the sequence is MFRFVCVLFIALVVFCTTTSA. Intrachain disulfides connect Cys26-Cys61, Cys35-Cys57, Cys39-Cys50, Cys43-Cys83, and Cys63-Cys77. A TIL domain is found at 26–83; it reads CNRPNEEYRCGSACQTTCATLGQRCPIMNIRCNDACYCKEGYARYGDDTGMCVSISQC.

It belongs to the serine protease inhibitor-like (TIL domain-containing) family. In terms of tissue distribution, expressed by the venom gland.

It is found in the secreted. Inhibits metalloprotease (human MMP3), trypsin, chymotrypsin, plasmin and microbial serine protease (proteinase K). Exhibits antifibrinolytic activity by binding plasmin and inhibiting it. Does not inhibit elastase, thrombin or microbial serine protease (subtilisin A). The protein is Venom metalloprotease inhibitor of Bombus ignitus (Bumblebee).